Consider the following 295-residue polypeptide: Protoheme IX farnesyltransferase (295 aa).

The Cytoplasmic segment spans residues 1–9 (MSVKHFIQI). Residues 10–28 (TKPGIIFGNVLSVAGGFFL) form a helical membrane-spanning segment. Residues 29 to 37 (ASKGHVDFA) are Periplasmic-facing. Residues 38–56 (LFLAVVIGTSLVVASGCVF) traverse the membrane as a helical segment. Topologically, residues 57–78 (NNCIDRDIDHKMERTKNRVMVQ) are cytoplasmic. A helical membrane pass occupies residues 79–97 (GGMSLPLALIYATLLGVAG). Topologically, residues 98 to 107 (FSLLYVQANP) are periplasmic. Residues 108-126 (LSAFCALIGFIVYVGFYSL) form a helical membrane-spanning segment. Residues 127–197 (WLKRKSVHGT…YSAANIPVLP (71 aa)) are Cytoplasmic-facing. Residues 198-216 (VARGILAAKKQIVLYVLAF) form a helical membrane-spanning segment. The Periplasmic segment spans residues 217–228 (VLATLMLTLGGY). The chain crosses the membrane as a helical span at residues 229 to 247 (AGLGYLAVAAAMGLYWLYM). Residues 248-268 (AWGGYKAEDDSKWARKVFGFS) lie on the Cytoplasmic side of the membrane. A helical membrane pass occupies residues 269 to 287 (ILTVTALSVMMGVDSQTAA). At 288-295 (DVLMTYAR) the chain is on the periplasmic side.

It belongs to the UbiA prenyltransferase family. Mg(2+) serves as cofactor. Requires Ca(2+) as cofactor.

The protein localises to the cell inner membrane. It carries out the reaction heme b + (2E,6E)-farnesyl diphosphate + H2O = Fe(II)-heme o + diphosphate. Converts protoheme IX and farnesyl diphosphate to heme O. This Pseudomonas putida (Arthrobacter siderocapsulatus) protein is Protoheme IX farnesyltransferase (cyoE).